Here is a 519-residue protein sequence, read N- to C-terminus: Acetylcholine receptor subunit gamma (519 aa).

The signal sequence occupies residues 1-22 (MHGGQGPQLLLLLLATCLGAQS). Residues 23 to 240 (RNQEERLLAD…VVFYLLIQRK (218 aa)) are Extracellular-facing. 2 N-linked (GlcNAc...) asparagine glycosylation sites follow: N52 and N163. The cysteines at positions 150 and 164 are disulfide-linked. A run of 3 helical transmembrane segments spans residues 241–265 (PLFY…IYFL), 274–292 (CTVA…FLVA), and 308–329 (YLTF…VLNV). The Cytoplasmic portion of the chain corresponds to 330 to 476 (SLRSPHTHSM…WLLVGRVLDR (147 aa)). The chain crosses the membrane as a helical span at residues 477–497 (VCFLAMLSLFICGTAGIFLMA).

This sequence belongs to the ligand-gated ion channel (TC 1.A.9) family. Acetylcholine receptor (TC 1.A.9.1) subfamily. Gamma/CHRNG sub-subfamily. As to quaternary structure, pentamer of two alpha chains, and one each of the beta, delta, and gamma (in immature muscle) or epsilon (in mature muscle) chains.

It localises to the postsynaptic cell membrane. Its subcellular location is the cell membrane. It carries out the reaction K(+)(in) = K(+)(out). It catalyses the reaction Na(+)(in) = Na(+)(out). In terms of biological role, after binding acetylcholine, the AChR responds by an extensive change in conformation that affects all subunits and leads to opening of an ion-conducting channel across the plasma membrane. In Rattus norvegicus (Rat), this protein is Acetylcholine receptor subunit gamma (Chrng).